The following is a 118-amino-acid chain: V-type proton ATPase subunit G 2 (118 aa).

Residues 23-90 (ADARKRKARR…VQGMQSSQQR (68 aa)) form a disordered region. Positions 35-55 (QAKEEAQMEVEQYRREREQEF) are enriched in basic and acidic residues. 2 stretches are compositionally biased toward polar residues: residues 56 to 69 (QSKQ…QGNL) and 78 to 89 (RRQVQGMQSSQQ).

Belongs to the V-ATPase G subunit family. V-ATPase is a heteromultimeric enzyme made up of two complexes: the ATP-hydrolytic V1 complex and the proton translocation V0 complex. The V1 complex consists of three catalytic AB heterodimers that form a heterohexamer, three peripheral stalks each consisting of EG heterodimers, one central rotor including subunits D and F, and the regulatory subunits C and H. The proton translocation complex V0 consists of the proton transport subunit a, a ring of proteolipid subunits c9c'', rotary subunit d, subunits e and f, and the accessory subunits ATP6AP1/Ac45 and ATP6AP2/PRR.

It localises to the melanosome. Its subcellular location is the cytoplasmic vesicle. It is found in the clathrin-coated vesicle membrane. Functionally, subunit of the V1 complex of vacuolar(H+)-ATPase (V-ATPase), a multisubunit enzyme composed of a peripheral complex (V1) that hydrolyzes ATP and a membrane integral complex (V0) that translocates protons. V-ATPase is responsible for acidifying and maintaining the pH of intracellular compartments and in some cell types, is targeted to the plasma membrane, where it is responsible for acidifying the extracellular environment. In Macaca mulatta (Rhesus macaque), this protein is V-type proton ATPase subunit G 2 (ATP6V1G2).